The chain runs to 173 residues: Alpha-crystallin A chain (173 aa).

The residue at position 1 (methionine 1) is an N-acetylmethionine. In terms of domain architecture, sHSP spans 52–162 (LFRTVLESGI…SHNERPIPVS (111 aa)). Residues histidine 100, glutamate 102, histidine 107, and histidine 154 each contribute to the Zn(2+) site. Residues 144–173 (PKVQSNTDPSHNERPIPVSREEKPTSAPPS) are disordered. Residues 153–167 (SHNERPIPVSREEKP) show a composition bias toward basic and acidic residues. Serine 162 carries O-linked (GlcNAc) serine glycosylation.

Belongs to the small heat shock protein (HSP20) family. In terms of assembly, heteropolymer composed of three CRYAA and one CRYAB subunits. Inter-subunit bridging via zinc ions enhances stability, which is crucial as there is no protein turn over in the lens. Can also form homodimers and homotetramers (dimers of dimers) which serve as the building blocks of homooligomers. Within homooligomers, the zinc-binding motif is created from residues of 3 different molecules. His-100 and Glu-102 from one molecule are ligands of the zinc ion, and His-107 and His-154 residues from additional molecules complete the site with tetrahedral coordination geometry.

The protein localises to the cytoplasm. The protein resides in the nucleus. In terms of biological role, contributes to the transparency and refractive index of the lens. May act as a chaperone, preventing aggregation of various proteins under a wide range of stress conditions. The sequence is that of Alpha-crystallin A chain (CRYAA) from Tupinambis teguixin (Golden tegu).